The sequence spans 129 residues: Histone H2A-III (129 aa).

The segment at 1-22 (MSGRGKQGGKARAKAKSRSSRA) is disordered. An N-acetylserine modification is found at serine 2. Position 2 is a phosphoserine (serine 2). An N6-(2-hydroxyisobutyryl)lysine modification is found at lysine 6. N6-acetyllysine is present on residues lysine 6 and lysine 10. Residues 7–19 (QGGKARAKAKSRS) are compositionally biased toward basic residues. Lysine 10 is modified (N6-(2-hydroxyisobutyryl)lysine; alternate). Lysine 10 bears the N6-lactoyllysine; alternate mark. An N6-succinyllysine modification is found at lysine 10. Glycyl lysine isopeptide (Lys-Gly) (interchain with G-Cter in ubiquitin) cross-links involve residues lysine 14 and lysine 16. Lysine 37 carries the post-translational modification N6-(2-hydroxyisobutyryl)lysine; alternate. An N6-(2-hydroxyisobutyryl)lysine mark is found at lysine 75 and lysine 76. The residue at position 96 (lysine 96) is an N6-(2-hydroxyisobutyryl)lysine; alternate. An N6-succinyllysine modification is found at lysine 96. Lysine 96 carries the N6-glutaryllysine; alternate modification. Lysine 100 carries the post-translational modification N6-glutaryllysine. N5-methylglutamine is present on glutamine 105. N6-(2-hydroxyisobutyryl)lysine; alternate is present on lysine 119. Lysine 119 and lysine 120 each carry N6-glutaryllysine; alternate. Lysine 120 is covalently cross-linked (Glycyl lysine isopeptide (Lys-Gly) (interchain with G-Cter in ubiquitin)).

The protein belongs to the histone H2A family. The nucleosome is a histone octamer containing two molecules each of H2A, H2B, H3 and H4 assembled in one H3-H4 heterotetramer and two H2A-H2B heterodimers. The octamer wraps approximately 147 bp of DNA. In terms of processing, monoubiquitination of Lys-120 (H2AK119Ub) gives a specific tag for epigenetic transcriptional repression. Following DNA double-strand breaks (DSBs), it is ubiquitinated through 'Lys-63' linkage of ubiquitin moieties, leading to the recruitment of repair proteins to sites of DNA damage. H2AK119Ub and ionizing radiation-induced 'Lys-63'-linked ubiquitination are distinct events. Phosphorylation on Ser-2 is enhanced during mitosis. Phosphorylation on Ser-2 directly represses transcription. Post-translationally, glutamine methylation at Gln-105 (H2AQ104me) by FBL is specifically dedicated to polymerase I. It is present at 35S ribosomal DNA locus and impairs binding of the FACT complex.

It localises to the nucleus. Its subcellular location is the chromosome. In terms of biological role, core component of nucleosome. Nucleosomes wrap and compact DNA into chromatin, limiting DNA accessibility to the cellular machineries which require DNA as a template. Histones thereby play a central role in transcription regulation, DNA repair, DNA replication and chromosomal stability. DNA accessibility is regulated via a complex set of post-translational modifications of histones, also called histone code, and nucleosome remodeling. The chain is Histone H2A-III from Gallus gallus (Chicken).